A 210-amino-acid polypeptide reads, in one-letter code: Ribonuclease HII (210 aa).

The 190-residue stretch at 17 to 206 (DIICGVDEAG…VRALLGGVTP (190 aa)) folds into the RNase H type-2 domain. Aspartate 23, glutamate 24, and aspartate 115 together coordinate a divalent metal cation.

This sequence belongs to the RNase HII family. The cofactor is Mn(2+). Requires Mg(2+) as cofactor.

The protein localises to the cytoplasm. It carries out the reaction Endonucleolytic cleavage to 5'-phosphomonoester.. In terms of biological role, endonuclease that specifically degrades the RNA of RNA-DNA hybrids. The protein is Ribonuclease HII of Janthinobacterium sp. (strain Marseille) (Minibacterium massiliensis).